Here is a 501-residue protein sequence, read N- to C-terminus: NADH-quinone oxidoreductase subunit N (501 aa).

14 helical membrane passes run His4–Val24, Phe34–Leu54, Leu80–Gly100, Gly112–Gly132, Leu134–Phe154, Leu167–Met187, Pro207–Phe227, Pro241–Tyr261, Leu278–Ala298, Val314–Leu334, His335–Trp355, Met376–Phe396, Gly409–Phe429, and Pro463–Phe483.

This sequence belongs to the complex I subunit 2 family. In terms of assembly, NDH-1 is composed of 14 different subunits. Subunits NuoA, H, J, K, L, M, N constitute the membrane sector of the complex.

It is found in the cell membrane. It carries out the reaction a quinone + NADH + 5 H(+)(in) = a quinol + NAD(+) + 4 H(+)(out). Its function is as follows. NDH-1 shuttles electrons from NADH, via FMN and iron-sulfur (Fe-S) centers, to quinones in the respiratory chain. The immediate electron acceptor for the enzyme in this species is believed to be a menaquinone. Couples the redox reaction to proton translocation (for every two electrons transferred, four hydrogen ions are translocated across the cytoplasmic membrane), and thus conserves the redox energy in a proton gradient. In Desulforudis audaxviator (strain MP104C), this protein is NADH-quinone oxidoreductase subunit N.